We begin with the raw amino-acid sequence, 284 residues long: Bifunctional protein FolD (284 aa).

NADP(+)-binding positions include 165-167 (GRS), S190, and V231.

This sequence belongs to the tetrahydrofolate dehydrogenase/cyclohydrolase family. In terms of assembly, homodimer.

It carries out the reaction (6R)-5,10-methylene-5,6,7,8-tetrahydrofolate + NADP(+) = (6R)-5,10-methenyltetrahydrofolate + NADPH. It catalyses the reaction (6R)-5,10-methenyltetrahydrofolate + H2O = (6R)-10-formyltetrahydrofolate + H(+). Its pathway is one-carbon metabolism; tetrahydrofolate interconversion. Its function is as follows. Catalyzes the oxidation of 5,10-methylenetetrahydrofolate to 5,10-methenyltetrahydrofolate and then the hydrolysis of 5,10-methenyltetrahydrofolate to 10-formyltetrahydrofolate. The chain is Bifunctional protein FolD from Ruminiclostridium cellulolyticum (strain ATCC 35319 / DSM 5812 / JCM 6584 / H10) (Clostridium cellulolyticum).